The following is a 210-amino-acid chain: Proteasome subunit beta (210 aa).

Positions 1–9 (MDNDKHLKG) are cleaved as a propeptide — removed in mature form; by autocatalysis. T10 acts as the Nucleophile in catalysis.

It belongs to the peptidase T1B family. The 20S proteasome core is composed of 14 alpha and 14 beta subunits that assemble into four stacked heptameric rings, resulting in a barrel-shaped structure. The two inner rings, each composed of seven catalytic beta subunits, are sandwiched by two outer rings, each composed of seven alpha subunits. The catalytic chamber with the active sites is on the inside of the barrel. Has a gated structure, the ends of the cylinder being occluded by the N-termini of the alpha-subunits. Is capped at one or both ends by the proteasome regulatory ATPase, PAN.

It is found in the cytoplasm. The enzyme catalyses Cleavage of peptide bonds with very broad specificity.. Its activity is regulated as follows. The formation of the proteasomal ATPase PAN-20S proteasome complex, via the docking of the C-termini of PAN into the intersubunit pockets in the alpha-rings, triggers opening of the gate for substrate entry. Interconversion between the open-gate and close-gate conformations leads to a dynamic regulation of the 20S proteasome proteolysis activity. Component of the proteasome core, a large protease complex with broad specificity involved in protein degradation. The protein is Proteasome subunit beta of Methanococcoides burtonii (strain DSM 6242 / NBRC 107633 / OCM 468 / ACE-M).